Reading from the N-terminus, the 137-residue chain is Putative pre-16S rRNA nuclease (137 aa).

It belongs to the YqgF nuclease family.

Its subcellular location is the cytoplasm. Functionally, could be a nuclease involved in processing of the 5'-end of pre-16S rRNA. The protein is Putative pre-16S rRNA nuclease of Buchnera aphidicola subsp. Schizaphis graminum (strain Sg).